Consider the following 439-residue polypeptide: High-energy light unresponsive protein 1 (439 aa).

The Cytoplasmic segment spans residues 1–67 (MPPPSSHSNI…LGLNQSIRPN (67 aa)). A helical membrane pass occupies residues 68 to 88 (NSLLFRIYSWLVFCLLLFTTL). The Extracellular segment spans residues 89–114 (RKFNQVGVRPNGTRENLQEFFANPRS). Residues 115 to 135 (MITLCNALIMLSGLLASLQLY) form a helical membrane-spanning segment. The Cytoplasmic portion of the chain corresponds to 136–164 (TLGAKRLKPLKILCQFSLNVRTKQAERRQ). Residues 165–185 (FMINTFLAVFSGLLALTMAAT) form a helical membrane-spanning segment. The Extracellular portion of the chain corresponds to 186 to 211 (YAMSKWGYILYIVGTPNLDTETIFCV). Residues 212–232 (LLDSYALFVSRAAISALAILF) traverse the membrane as a helical segment. The Cytoplasmic segment spans residues 233-290 (YQHCSVIRRSIKHLINEMVPAEQDECPLPESSLQKIHDCQISYQRIFNGKAVIEEYYS). Residues 291–311 (FVLFYSYGVCIPIFCFLMFVG) traverse the membrane as a helical segment. Over 312–324 (MSAQSICWSEVVS) the chain is Extracellular. Residues 325–345 (IVIWIVNAILVLLLFSLPAFM) form a helical membrane-spanning segment. The Cytoplasmic portion of the chain corresponds to 346–402 (INEDGDRLVASSFRMYHETFHEERDLTVLSQMTFFTFQIHSTKLTLSACNYFYMDRS). Residues 403 to 423 (ILLSLFSAILTYFLILWEFDI) traverse the membrane as a helical segment. Over 424-439 (KNNQSLQNIANHTIHT) the chain is Extracellular.

It belongs to the insect chemoreceptor superfamily. Gustatory receptor (GR) family. Expressed in the AVG and PVT neurons of the tail.

It is found in the cell membrane. In terms of biological role, photoreceptor for short wavelength (UV) light that mediates UV-light-induced avoidance behavior. Directly senses and absorbs both UV-A and UV-B light with very high efficiency. Absorption of UV-B but not UV-A light shows resistance to photobleaching. In contrast to other photoreceptors, does not use a prosthetic chromophore to capture photons and only depends on its protein conformation. Might have a role in response to white light exposure. The chain is High-energy light unresponsive protein 1 from Caenorhabditis elegans.